Consider the following 210-residue polypeptide: LexA repressor (210 aa).

The segment at residues 25 to 44 (AGQVAQEVGITKQAISQQVN) is a DNA-binding region (H-T-H motif). Active-site for autocatalytic cleavage activity residues include Ser120 and Lys159.

The protein belongs to the peptidase S24 family. In terms of assembly, homodimer.

It carries out the reaction Hydrolysis of Ala-|-Gly bond in repressor LexA.. Its function is as follows. Represses a number of genes involved in the response to DNA damage (SOS response), including recA and lexA. In the presence of single-stranded DNA, RecA interacts with LexA causing an autocatalytic cleavage which disrupts the DNA-binding part of LexA, leading to derepression of the SOS regulon and eventually DNA repair. This Deinococcus radiodurans (strain ATCC 13939 / DSM 20539 / JCM 16871 / CCUG 27074 / LMG 4051 / NBRC 15346 / NCIMB 9279 / VKM B-1422 / R1) protein is LexA repressor.